Here is a 251-residue protein sequence, read N- to C-terminus: MRYLKRITIYISLLILVSGCGNNKEAEIKQNFNKTLSMYPIKNLENFYDKEGFRDEEFDKDDKGTWIINSKMIVEPKGKDMEARGMVLHINRNTRTTKGDFIIKRITEDNKGIPDVKDKKYPVKMENNKIIPTKQIKDKKLKKEIENFKFFVQYGNFKNLKHYKDGEISYNPNVPSYSAKYQLSNNGYNVKQLRKRYDIPTNQAPKLLLKGTGDLKGSSVGYNHLEFTFVENKKENIYFTDSINFNPSRGD.

An N-terminal signal peptide occupies residues 1 to 19 (MRYLKRITIYISLLILVSG). Residue cysteine 20 is the site of N-palmitoyl cysteine attachment. Cysteine 20 carries the S-diacylglycerol cysteine lipid modification.

The protein belongs to the staphylococcal tandem lipoprotein family.

The protein localises to the cell membrane. This is an uncharacterized protein from Staphylococcus epidermidis (strain ATCC 12228 / FDA PCI 1200).